A 585-amino-acid chain; its full sequence is Protein DENND6B (585 aa).

The span at 1–10 shows a compositional bias: low complexity; that stretch reads MEVPVGPGPR. The segment at 1 to 25 is disordered; that stretch reads MEVPVGPGPRQAGGGLGATRSSSSG. The region spanning 43 to 221 is the uDENN domain; that stretch reads ECVCVVTFDL…IQVRIPSRVD (179 aa). In terms of domain architecture, cDENN spans 246-373; that stretch reads VHELDLFRCF…VKLKKPSRLK (128 aa). A dDENN domain is found at 375 to 499; that stretch reads LDTKPGLYTS…KSPHFDGWYR (125 aa).

Belongs to the DENND6 family.

The protein localises to the recycling endosome. It localises to the cytoplasm. Functionally, guanine nucleotide exchange factor (GEF) for RAB14. Also has some, lesser GEF activity towards RAB35. In Mus musculus (Mouse), this protein is Protein DENND6B (Dennd6b).